The primary structure comprises 240 residues: Sugar fermentation stimulation protein homolog (240 aa).

The protein belongs to the SfsA family.

The polypeptide is Sugar fermentation stimulation protein homolog (Crocosphaera subtropica (strain ATCC 51142 / BH68) (Cyanothece sp. (strain ATCC 51142))).